We begin with the raw amino-acid sequence, 175 residues long: Isopentenyl-diphosphate Delta-isomerase (175 aa).

Mn(2+)-binding residues include H22 and H29. The region spanning K27–E160 is the Nudix hydrolase domain. Residue C64 is part of the active site. C64 is a binding site for Mg(2+). Residue H66 coordinates Mn(2+). Position 84 (E84) interacts with Mg(2+). E110 and E112 together coordinate Mn(2+). E112 is an active-site residue.

The protein belongs to the IPP isomerase type 1 family. The cofactor is Mg(2+). Mn(2+) serves as cofactor.

It localises to the cytoplasm. It carries out the reaction isopentenyl diphosphate = dimethylallyl diphosphate. Its pathway is isoprenoid biosynthesis; dimethylallyl diphosphate biosynthesis; dimethylallyl diphosphate from isopentenyl diphosphate: step 1/1. Functionally, catalyzes the 1,3-allylic rearrangement of the homoallylic substrate isopentenyl (IPP) to its highly electrophilic allylic isomer, dimethylallyl diphosphate (DMAPP). The polypeptide is Isopentenyl-diphosphate Delta-isomerase (Nocardia farcinica (strain IFM 10152)).